A 514-amino-acid polypeptide reads, in one-letter code: 1-pyrroline-5-carboxylate dehydrogenase (514 aa).

Catalysis depends on residues Glu-286 and Cys-320.

It belongs to the aldehyde dehydrogenase family. RocA subfamily.

The enzyme catalyses L-glutamate 5-semialdehyde + NAD(+) + H2O = L-glutamate + NADH + 2 H(+). It functions in the pathway amino-acid degradation; L-proline degradation into L-glutamate; L-glutamate from L-proline: step 2/2. The polypeptide is 1-pyrroline-5-carboxylate dehydrogenase (Staphylococcus epidermidis (strain ATCC 12228 / FDA PCI 1200)).